A 182-amino-acid polypeptide reads, in one-letter code: Ribosome-recycling factor (182 aa).

It belongs to the RRF family.

Its subcellular location is the cytoplasm. Responsible for the release of ribosomes from messenger RNA at the termination of protein biosynthesis. May increase the efficiency of translation by recycling ribosomes from one round of translation to another. The chain is Ribosome-recycling factor from Synechocystis sp. (strain ATCC 27184 / PCC 6803 / Kazusa).